The chain runs to 96 residues: Putative membrane protein insertion efficiency factor (96 aa).

Belongs to the UPF0161 family.

It is found in the cell inner membrane. Functionally, could be involved in insertion of integral membrane proteins into the membrane. The polypeptide is Putative membrane protein insertion efficiency factor (Borreliella afzelii (strain PKo) (Borrelia afzelii)).